A 526-amino-acid polypeptide reads, in one-letter code: 3-hydroxy-3-methylglutaryl-coenzyme A reductase 2 (526 aa).

Active-site charge relay system residues include Glu-193, Lys-325, and Asp-401. His-499 (proton donor) is an active-site residue. A disordered region spans residues 503-526 (NRKTEAPAPQADTISMTHNLPHSD). A compositionally biased stretch (polar residues) spans 514–526 (DTISMTHNLPHSD).

Belongs to the HMG-CoA reductase family.

The enzyme catalyses (R)-mevalonate + 2 NADP(+) + CoA = (3S)-3-hydroxy-3-methylglutaryl-CoA + 2 NADPH + 2 H(+). It participates in metabolic intermediate biosynthesis; (R)-mevalonate biosynthesis; (R)-mevalonate from acetyl-CoA: step 3/3. Functionally, this transmembrane glycoprotein is involved in the control of cholesterol biosynthesis. It is the rate-limiting enzyme of the sterol biosynthesis. The sequence is that of 3-hydroxy-3-methylglutaryl-coenzyme A reductase 2 (hmgB) from Dictyostelium discoideum (Social amoeba).